We begin with the raw amino-acid sequence, 353 residues long: Uroporphyrinogen decarboxylase (353 aa).

Substrate contacts are provided by residues 28–32 (RQAGR), D78, Y155, S210, and H325.

This sequence belongs to the uroporphyrinogen decarboxylase family. As to quaternary structure, homodimer.

It localises to the cytoplasm. It catalyses the reaction uroporphyrinogen III + 4 H(+) = coproporphyrinogen III + 4 CO2. It functions in the pathway porphyrin-containing compound metabolism; protoporphyrin-IX biosynthesis; coproporphyrinogen-III from 5-aminolevulinate: step 4/4. Functionally, catalyzes the decarboxylation of four acetate groups of uroporphyrinogen-III to yield coproporphyrinogen-III. This Nostoc punctiforme (strain ATCC 29133 / PCC 73102) protein is Uroporphyrinogen decarboxylase.